The chain runs to 159 residues: Urease accessory protein UreE (159 aa).

Belongs to the UreE family.

It localises to the cytoplasm. Functionally, involved in urease metallocenter assembly. Binds nickel. Probably functions as a nickel donor during metallocenter assembly. This is Urease accessory protein UreE from Vibrio parahaemolyticus.